A 295-amino-acid polypeptide reads, in one-letter code: Ribosomal RNA small subunit methyltransferase A (295 aa).

Residues asparagine 29, leucine 31, glycine 56, glutamate 77, aspartate 102, and asparagine 128 each contribute to the S-adenosyl-L-methionine site.

The protein belongs to the class I-like SAM-binding methyltransferase superfamily. rRNA adenine N(6)-methyltransferase family. RsmA subfamily.

It is found in the cytoplasm. It carries out the reaction adenosine(1518)/adenosine(1519) in 16S rRNA + 4 S-adenosyl-L-methionine = N(6)-dimethyladenosine(1518)/N(6)-dimethyladenosine(1519) in 16S rRNA + 4 S-adenosyl-L-homocysteine + 4 H(+). In terms of biological role, specifically dimethylates two adjacent adenosines (A1518 and A1519) in the loop of a conserved hairpin near the 3'-end of 16S rRNA in the 30S particle. May play a critical role in biogenesis of 30S subunits. The protein is Ribosomal RNA small subunit methyltransferase A of Listeria monocytogenes serotype 4b (strain CLIP80459).